The following is a 206-amino-acid chain: Uridine kinase (206 aa).

Residue glycine 11–serine 18 participates in ATP binding.

This sequence belongs to the uridine kinase family.

It localises to the cytoplasm. It catalyses the reaction uridine + ATP = UMP + ADP + H(+). The catalysed reaction is cytidine + ATP = CMP + ADP + H(+). The protein operates within pyrimidine metabolism; CTP biosynthesis via salvage pathway; CTP from cytidine: step 1/3. It participates in pyrimidine metabolism; UMP biosynthesis via salvage pathway; UMP from uridine: step 1/1. In Clostridium botulinum (strain Okra / Type B1), this protein is Uridine kinase.